Consider the following 92-residue polypeptide: Kappa-scoloptoxin(15)-Ssd2a (92 aa).

The signal sequence occupies residues 1–20 (MKMVYLGLFLIITSCVISSG).

In terms of processing, contains 3 disulfide bonds. As to expression, expressed by the venom gland.

Its subcellular location is the secreted. Inhibits voltage-gated potassium channels (Kv) (IC(50)=about 10 nM), when tested on DRG neurons. This Scolopendra dehaani (Thai centipede) protein is Kappa-scoloptoxin(15)-Ssd2a.